The chain runs to 558 residues: Oxygen-dependent choline dehydrogenase (558 aa).

An FAD-binding site is contributed by 8–37; the sequence is DYIIIGAGSAGNVLATRLTEDSDVSVLLLE. The active-site Proton acceptor is His475.

This sequence belongs to the GMC oxidoreductase family. It depends on FAD as a cofactor.

It catalyses the reaction choline + A = betaine aldehyde + AH2. It carries out the reaction betaine aldehyde + NAD(+) + H2O = glycine betaine + NADH + 2 H(+). It participates in amine and polyamine biosynthesis; betaine biosynthesis via choline pathway; betaine aldehyde from choline (cytochrome c reductase route): step 1/1. Functionally, involved in the biosynthesis of the osmoprotectant glycine betaine. Catalyzes the oxidation of choline to betaine aldehyde and betaine aldehyde to glycine betaine at the same rate. This chain is Oxygen-dependent choline dehydrogenase, found in Chromohalobacter salexigens (strain ATCC BAA-138 / DSM 3043 / CIP 106854 / NCIMB 13768 / 1H11).